The following is a 261-amino-acid chain: Ribosomal RNA small subunit methyltransferase G (261 aa).

Residues glycine 94, leucine 99, 117 to 119 (EST), 145 to 146 (VE), and arginine 164 contribute to the S-adenosyl-L-methionine site.

The protein belongs to the methyltransferase superfamily. RNA methyltransferase RsmG family.

The protein localises to the cytoplasm. In terms of biological role, specifically methylates the N7 position of a guanine in 16S rRNA. The sequence is that of Ribosomal RNA small subunit methyltransferase G from Rubrobacter xylanophilus (strain DSM 9941 / JCM 11954 / NBRC 16129 / PRD-1).